Reading from the N-terminus, the 325-residue chain is Terpene synthase 11 (325 aa).

Residues 97-102 (DDEYLE) carry the DDxx(x)D/E motif motif. Residues 227-235 (NDIYSFVKE) carry the NDxxSxxxD/E motif motif.

Belongs to the terpene synthase family.

It carries out the reaction (2E,6E)-farnesyl diphosphate = (E)-beta-farnesene + diphosphate. It catalyses the reaction (2E,6E)-farnesyl diphosphate = (3E,6E)-alpha-farnesene + diphosphate. The catalysed reaction is geranylgeranyl diphosphate + H2O = (S)-(+)-nephthenol + diphosphate. Terpene synthase that converts its substrate farnesyl diphosphate (FPP) into the sesquiterpenes (E)-beta-farnesene and (E,E)-alpha-farnesene. TPS11 also converts geranylgeranyl diphosphate (GGPP) into the diterpene (S)-nephthenol. This is Terpene synthase 11 from Dictyostelium purpureum (Slime mold).